The following is a 217-amino-acid chain: Ribosomal RNA small subunit methyltransferase G (217 aa).

Residues Gly-79, Leu-84, 130–131 (IE), and Arg-145 each bind S-adenosyl-L-methionine.

Belongs to the methyltransferase superfamily. RNA methyltransferase RsmG family.

Its subcellular location is the cytoplasm. The catalysed reaction is guanosine(527) in 16S rRNA + S-adenosyl-L-methionine = N(7)-methylguanosine(527) in 16S rRNA + S-adenosyl-L-homocysteine. Specifically methylates the N7 position of guanine in position 527 of 16S rRNA. This Hahella chejuensis (strain KCTC 2396) protein is Ribosomal RNA small subunit methyltransferase G.